The chain runs to 599 residues: Aspartate--tRNA(Asp/Asn) ligase (599 aa).

Glu172 lines the L-aspartate pocket. The segment at Gln196–Lys199 is aspartate. An L-aspartate-binding site is contributed by Arg218. Residues Arg218 to Glu220 and Gln227 each bind ATP. His455 provides a ligand contact to L-aspartate. Glu489 lines the ATP pocket. Arg496 contributes to the L-aspartate binding site. Residue Gly541–Arg544 coordinates ATP.

Belongs to the class-II aminoacyl-tRNA synthetase family. Type 1 subfamily. Homodimer.

The protein localises to the cytoplasm. The enzyme catalyses tRNA(Asx) + L-aspartate + ATP = L-aspartyl-tRNA(Asx) + AMP + diphosphate. Its function is as follows. Aspartyl-tRNA synthetase with relaxed tRNA specificity since it is able to aspartylate not only its cognate tRNA(Asp) but also tRNA(Asn). Reaction proceeds in two steps: L-aspartate is first activated by ATP to form Asp-AMP and then transferred to the acceptor end of tRNA(Asp/Asn). The protein is Aspartate--tRNA(Asp/Asn) ligase of Herminiimonas arsenicoxydans.